The following is a 143-amino-acid chain: Small ribosomal subunit protein uS12 (143 aa).

The segment covering 1–20 (MGKPRGLRTARKHRSHRRDQ) has biased composition (basic residues). The segment at 1 to 26 (MGKPRGLRTARKHRSHRRDQRWHDKD) is disordered. A Hydroxyproline modification is found at proline 62.

It belongs to the universal ribosomal protein uS12 family. In terms of assembly, component of the 40S small ribosomal subunit.

The protein localises to the cytoplasm. Its subcellular location is the cytosol. It is found in the rough endoplasmic reticulum. In Dermacentor variabilis (American dog tick), this protein is Small ribosomal subunit protein uS12 (RpS23).